Reading from the N-terminus, the 101-residue chain is MQIAKVRGTVVSTQKDPSLRGVKLLLLQLVDEEGNLLQKYEVAADNSVGAGFDEWVLISRGSAARQLLGNEQRPVDAAVVAIIDTIHVEDRLIYSKKDQYR.

The BMV domain occupies 1 to 84 (MQIAKVRGTV…VDAAVVAIID (84 aa)).

The protein belongs to the CcmL/EutN family. CcmL subfamily. In terms of assembly, homopentamer. Interacts with full-length CcmM.

The protein localises to the carboxysome. Probably forms vertices in the carboxysome, a polyhedral inclusion where RuBisCO (ribulose bisphosphate carboxylase, rbcL-rbcS) is sequestered. Has been modeled to induce curvature upon insertion into an otherwise flat hexagonal molecular layer of CcmK subunits. This Nostoc sp. (strain PCC 7120 / SAG 25.82 / UTEX 2576) protein is Carboxysome shell vertex protein CcmL.